The chain runs to 201 residues: Orotate phosphoribosyltransferase (201 aa).

113–121 (EDIITTGKS) serves as a coordination point for 5-phospho-alpha-D-ribose 1-diphosphate. Orotate contacts are provided by T117 and R145.

This sequence belongs to the purine/pyrimidine phosphoribosyltransferase family. PyrE subfamily. Homodimer. It depends on Mg(2+) as a cofactor.

It catalyses the reaction orotidine 5'-phosphate + diphosphate = orotate + 5-phospho-alpha-D-ribose 1-diphosphate. It participates in pyrimidine metabolism; UMP biosynthesis via de novo pathway; UMP from orotate: step 1/2. Catalyzes the transfer of a ribosyl phosphate group from 5-phosphoribose 1-diphosphate to orotate, leading to the formation of orotidine monophosphate (OMP). The polypeptide is Orotate phosphoribosyltransferase (Helicobacter pylori (strain G27)).